An 874-amino-acid chain; its full sequence is Leucine--tRNA ligase (874 aa).

The 'HIGH' region motif lies at 47-57 (PYPSGKLHMGH). Positions 636–640 (KMSKS) match the 'KMSKS' region motif. Lysine 639 lines the ATP pocket.

It belongs to the class-I aminoacyl-tRNA synthetase family.

It is found in the cytoplasm. It carries out the reaction tRNA(Leu) + L-leucine + ATP = L-leucyl-tRNA(Leu) + AMP + diphosphate. The sequence is that of Leucine--tRNA ligase from Acinetobacter baumannii (strain AB0057).